The primary structure comprises 690 residues: Elongation factor G (690 aa).

In terms of domain architecture, tr-type G spans 8–283; the sequence is EDYRNFGIMA…AVVDYLPSPI (276 aa). Residues 17–24, 81–85, and 135–138 each bind GTP; these read AHIDAGKT, DTPGH, and NKMD.

The protein belongs to the TRAFAC class translation factor GTPase superfamily. Classic translation factor GTPase family. EF-G/EF-2 subfamily.

The protein resides in the cytoplasm. In terms of biological role, catalyzes the GTP-dependent ribosomal translocation step during translation elongation. During this step, the ribosome changes from the pre-translocational (PRE) to the post-translocational (POST) state as the newly formed A-site-bound peptidyl-tRNA and P-site-bound deacylated tRNA move to the P and E sites, respectively. Catalyzes the coordinated movement of the two tRNA molecules, the mRNA and conformational changes in the ribosome. This is Elongation factor G from Bradyrhizobium diazoefficiens (strain JCM 10833 / BCRC 13528 / IAM 13628 / NBRC 14792 / USDA 110).